The following is a 696-amino-acid chain: Glycine--tRNA ligase beta subunit (696 aa).

This sequence belongs to the class-II aminoacyl-tRNA synthetase family. As to quaternary structure, tetramer of two alpha and two beta subunits.

Its subcellular location is the cytoplasm. The enzyme catalyses tRNA(Gly) + glycine + ATP = glycyl-tRNA(Gly) + AMP + diphosphate. The polypeptide is Glycine--tRNA ligase beta subunit (Methylorubrum extorquens (strain CM4 / NCIMB 13688) (Methylobacterium extorquens)).